The sequence spans 551 residues: Glucans biosynthesis protein D (551 aa).

Positions 1-32 (MNRRRFIKGSMAMAAVCGSSGIASLFSQAAFA) form a signal peptide, tat-type signal.

It belongs to the OpgD/OpgG family. In terms of processing, predicted to be exported by the Tat system. The position of the signal peptide cleavage has not been experimentally proven.

The protein resides in the periplasm. The protein operates within glycan metabolism; osmoregulated periplasmic glucan (OPG) biosynthesis. Its function is as follows. Probably involved in the control of the structural glucose backbone of osmoregulated periplasmic glucans (OPGs). The chain is Glucans biosynthesis protein D from Salmonella enteritidis PT4 (strain P125109).